A 147-amino-acid chain; its full sequence is MTLFIDADACPVAIREILFRAAQRKQLHLYLVANQRIQTPKSKFIHMVQVGSGFDVADHEIVRRCEADDLIITSDIPLASEVIDKGAKALSPRGELFTPDNIRQRLNIRDFMDTMRSSGIQSGGPPPLSNVDRKNFADHLDRLLAGS.

The protein belongs to the UPF0178 family.

In Idiomarina loihiensis (strain ATCC BAA-735 / DSM 15497 / L2-TR), this protein is UPF0178 protein IL2341.